Consider the following 356-residue polypeptide: Deoxyribonuclease-2-beta (356 aa).

The first 22 residues, 1–22, serve as a signal peptide directing secretion; it reads MTAQPLKAALPLLFVALSGVLG. 4 N-linked (GlcNAc...) asparagine glycosylation sites follow: asparagine 77, asparagine 98, asparagine 114, and asparagine 273.

Belongs to the DNase II family. In terms of tissue distribution, liver specific.

It is found in the lysosome. The enzyme catalyses Endonucleolytic cleavage to nucleoside 3'-phosphates and 3'-phosphooligonucleotide end-products.. Its function is as follows. Hydrolyzes DNA under acidic conditions. Does not require divalent cations for activity. Participates in the degradation of nuclear DNA during lens cell differentiation. The polypeptide is Deoxyribonuclease-2-beta (Dnase2b) (Rattus norvegicus (Rat)).